We begin with the raw amino-acid sequence, 368 residues long: Leu/Ile/Val-binding protein homolog 3 (368 aa).

Residues 1–23 (MNLKLLSSVAFAATIGFASAAYA) form the signal peptide.

This sequence belongs to the leucine-binding protein family.

Component of an amino-acid transport system. The protein is Leu/Ile/Val-binding protein homolog 3 of Brucella melitensis biotype 1 (strain ATCC 23456 / CCUG 17765 / NCTC 10094 / 16M).